A 334-amino-acid polypeptide reads, in one-letter code: Beta-hexosaminidase (334 aa).

Residues D60, R68, R133, and 163 to 164 (KH) each bind substrate. H176 functions as the Proton donor/acceptor in the catalytic mechanism. D247 serves as the catalytic Nucleophile.

It belongs to the glycosyl hydrolase 3 family. NagZ subfamily.

Its subcellular location is the cytoplasm. The enzyme catalyses Hydrolysis of terminal non-reducing N-acetyl-D-hexosamine residues in N-acetyl-beta-D-hexosaminides.. The protein operates within cell wall biogenesis; peptidoglycan recycling. Plays a role in peptidoglycan recycling by cleaving the terminal beta-1,4-linked N-acetylglucosamine (GlcNAc) from peptide-linked peptidoglycan fragments, giving rise to free GlcNAc, anhydro-N-acetylmuramic acid and anhydro-N-acetylmuramic acid-linked peptides. This chain is Beta-hexosaminidase, found in Xanthomonas oryzae pv. oryzae (strain MAFF 311018).